A 444-amino-acid polypeptide reads, in one-letter code: Platelet-activating factor acetylhydrolase (444 aa).

An N-terminal signal peptide occupies residues 1–21; that stretch reads MLPSKLHALFCLCTCLALVYP. N-linked (GlcNAc...) asparagine glycosylation is found at N60 and N200. Residue S274 is the Nucleophile of the active site. Catalysis depends on charge relay system residues D297 and H352. Residues N424 and N434 are each glycosylated (N-linked (GlcNAc...) asparagine).

Belongs to the AB hydrolase superfamily. Lipase family. N-glycosylated. In terms of tissue distribution, plasma.

It localises to the secreted. Its subcellular location is the extracellular space. It catalyses the reaction a 1-O-alkyl-2-acetyl-sn-glycero-3-phosphocholine + H2O = a 1-O-alkyl-sn-glycero-3-phosphocholine + acetate + H(+). It carries out the reaction 1-O-decyl-2-acetyl-sn-glycero-3-phosphocholine + H2O = 1-O-decyl-sn-glycero-3-phosphocholine + acetate + H(+). The catalysed reaction is 1-O-dodecyl-2-acetyl-sn-glycero-3-phosphocholine + H2O = 1-O-dodecyl-sn-glycero-3-phosphocholine + acetate + H(+). The enzyme catalyses 1-O-tetradecyl-2-acetyl-sn-glycero-3-phosphocholine + H2O = 1-O-tetradecyl-sn-glycero-3-phosphocholine + acetate + H(+). It catalyses the reaction 1-O-hexadecyl-2-acetyl-sn-glycero-3-phosphocholine + H2O = 1-O-hexadecyl-sn-glycero-3-phosphocholine + acetate + H(+). It carries out the reaction 1-O-octadecyl-2-acetyl-sn-glycero-3-phosphocholine + H2O = 1-O-octadecyl-sn-glycero-3-phosphocholine + acetate + H(+). The catalysed reaction is 1-hexadecanoyl-2-acetyl-sn-glycero-3-phosphocholine + H2O = 1-hexadecanoyl-sn-glycero-3-phosphocholine + acetate + H(+). The enzyme catalyses 1-hexadecanoyl-2-propionyl-sn-glycero-3-phosphocholine + H2O = propanoate + 1-hexadecanoyl-sn-glycero-3-phosphocholine + H(+). It catalyses the reaction 1-hexadecanoyl-2-butanoyl-sn-glycero-3-phosphocholine + H2O = butanoate + 1-hexadecanoyl-sn-glycero-3-phosphocholine + H(+). It carries out the reaction 1-hexadecanoyl-2-pentanoyl-sn-glycero-3-phosphocholine + H2O = pentanoate + 1-hexadecanoyl-sn-glycero-3-phosphocholine + H(+). The catalysed reaction is 1-hexadecanoyl-2-glutaroyl-sn-glycero-3-phosphocholine + H2O = glutarate + 1-hexadecanoyl-sn-glycero-3-phosphocholine + H(+). The enzyme catalyses 1-hexadecanoyl-2-(5-oxopentanoyl)-sn-glycero-3-phosphocholine + H2O = 5-oxopentanoate + 1-hexadecanoyl-sn-glycero-3-phosphocholine + H(+). It catalyses the reaction 1-hexadecanoyl-2-(9-oxononanoyl)-sn-glycero-3-phosphocholine + H2O = 9-oxononanoate + 1-hexadecanoyl-sn-glycero-3-phosphocholine + H(+). It carries out the reaction 1-hexadecanoyl-2-[9-hydroperoxy-(10E-octadecenoyl)]-sn-glycero-3-phosphocholine + H2O = 9-hydroperoxy-10E-octadecenoate + 1-hexadecanoyl-sn-glycero-3-phosphocholine + H(+). The catalysed reaction is 1-hexadecanoyl-2-(10-hydroperoxy-8E-octadecenoyl)-sn-glycero-3-phosphocholine + H2O = 10-hydroperoxy-(8E)-octadecenoate + 1-hexadecanoyl-sn-glycero-3-phosphocholine + H(+). In terms of biological role, lipoprotein-associated calcium-independent phospholipase A2 involved in phospholipid catabolism during inflammatory and oxidative stress response. At the lipid-aqueous interface, hydrolyzes the ester bond of fatty acyl group attached at sn-2 position of phospholipids (phospholipase A2 activity). Specifically targets phospholipids with a short-chain fatty acyl group at sn-2 position. Can hydrolyze phospholipids with long fatty acyl chains, only if they carry oxidized functional groups. Hydrolyzes and inactivates platelet-activating factor (PAF, 1-O-alkyl-2-acetyl-sn-glycero-3-phosphocholine), a potent pro-inflammatory signaling lipid that acts through PTAFR on various innate immune cells. Hydrolyzes oxidatively truncated phospholipids carrying an aldehyde group at omega position, preventing their accumulation in low-density lipoprotein (LDL) particles and uncontrolled pro-inflammatory effects. As part of high-density lipoprotein (HDL) particles, can hydrolyze phospholipids having long-chain fatty acyl hydroperoxides at sn-2 position and protect against potential accumulation of these oxylipins in the vascular wall. Catalyzes the release from membrane phospholipids of F2-isoprostanes, lipid biomarkers of cellular oxidative damage. The polypeptide is Platelet-activating factor acetylhydrolase (PLA2G7) (Bos taurus (Bovine)).